Reading from the N-terminus, the 207-residue chain is Hepatic lectin (207 aa).

Met1 bears the N-acetylmethionine mark. Residues 1 to 23 (MDEERLSDNVRLYKGGSIRQGLR) lie on the Cytoplasmic side of the membrane. Residues 24–48 (SFAAVYVLLALSFLLLTLLSSVSLA) traverse the membrane as a helical; Signal-anchor for type II membrane protein segment. The Extracellular segment spans residues 49–207 (RIAALSSKLS…YYVCEKPLPK (159 aa)). Asn67 is a glycosylation site (N-linked (GlcNAc...) asparagine). In terms of domain architecture, C-type lectin spans 77–203 (PCGAQSRQWE…TYECYYVCEK (127 aa)). Intrachain disulfides connect Cys78/Cys92, Cys109/Cys201, and Cys179/Cys193.

Post-translationally, some or all of the cysteines are involved in disulfide bonds.

The protein resides in the membrane. Hepatic lectin is a membrane receptor protein that recognizes and binds exposed N-acetylglucosamine moieties of plasma glycoproteins, thus mediating their clearance (from the circulation) and endocytosis. The sequence is that of Hepatic lectin from Gallus gallus (Chicken).